A 1040-amino-acid chain; its full sequence is Exosome RNA helicase MTR4 (1040 aa).

At Ala2 the chain carries N-acetylalanine. A disordered region spans residues 16 to 77 (DSTSAAGAKK…GTDEPIFGKK (62 aa)). A compositionally biased stretch (basic and acidic residues) spans 23–33 (AKKDKEKEKWK). Lys24 is covalently cross-linked (Glycyl lysine isopeptide (Lys-Gly) (interchain with G-Cter in SUMO2)). Phosphoserine is present on Ser38. Basic and acidic residues predominate over residues 41 to 50 (KAGKRLDTKL). 2 positions are modified to N6-acetyllysine: Lys49 and Lys76. ATP-binding positions include Ile137, 159-166 (AHTSAGKT), Ser162, Gly164, Lys165, and Thr166. The Helicase ATP-binding domain occupies 146–302 (IQCVDNNQSV…WICHLHKQPC (157 aa)). Positions 250–253 (DEIH) match the DEIH box motif. Lys356 is covalently cross-linked (Glycyl lysine isopeptide (Lys-Gly) (interchain with G-Cter in SUMO2)). The 173-residue stretch at 403–575 (QMTKLDFNTD…NMVLNLLRVE (173 aa)) folds into the Helicase C-terminal domain. Glycyl lysine isopeptide (Lys-Gly) (interchain with G-Cter in SUMO2) cross-links involve residues Lys682 and Lys721.

The protein belongs to the helicase family. SKI2 subfamily. As to quaternary structure, component of a TRAMP-like complex, an ATP-dependent exosome regulatory complex consisting of a helicase (MTREX), an oligadenylate polymerase (TENT4B or TENT4A), and a substrate specific RNA-binding factor (ZCCHC7 or ZCCHC8). Several TRAMP-like complexes exist with specific compositions and are associated with nuclear, or nucleolar RNA exosomes. Identified in the spliceosome C complex. Component of the poly(A) tail exosome targeting (PAXT) complex made of PABPN1, ZFC3H1 and MTREX that directs a subset of long and polyadenylated poly(A) RNAs for exosomal degradation. Component of the nuclear exosome targeting (NEXT) complex composed of MTREX, ZCCHC8, and RBM7 that directs a subset of non-coding short-lived RNAs for exosomal degradation. Interacts with ZCCHC8; this interaction bridges the interaction between RBM7 and MTREX. Binds to ZFC3H1 and RBM7 in a RNase-insensitive manner. Interacts with EXOSC10; the interaction mediates the association of MTREX with nuclear RNA exosomes. Interacts with isoform 1 of NVL in an ATP-dependent manner; the interaction is required to associate NVL with nuclear RNA exosome. Interacts with WDR74; the interaction dissociation in a late stage of rRNA synthesis is required for appropriate maturation of pre-60S particles and depends on the ATPase activity of NVL. Interacts with MPHOSPH6. Interacts with the RNA cap-binding complex proteins NCBP1 and SRRT. Interacts with NRDE2; the interaction is direct and negatively regulates MTREX function in exosomal degradation by changing its conformation precluding interaction with ZFC3H1, the RNA cap-binding complex proteins NCBP1 and SRRT, and association with the exosome. Associates with the RNA exosome complex.

It localises to the nucleus. The protein resides in the nucleoplasm. Its subcellular location is the nucleolus. The protein localises to the nucleus speckle. The enzyme catalyses ATP + H2O = ADP + phosphate + H(+). Its activity is regulated as follows. Activated when MTREX is incorporated into NEXT complex an the nuclear RNA exosome complex. Functionally, catalyzes the ATP-dependent unwinding of RNA duplexes with a single-stranded 3' RNA extension. Central subunit of many protein complexes, namely TRAMP-like, nuclear exosome targeting (NEXT) and poly(A) tail exosome targeting (PAXT). NEXT functions as an RNA exosome cofactor that directs a subset of non-coding short-lived RNAs for exosomal degradation. NEXT is involved in surveillance and turnover of aberrant transcripts and non-coding RNAs. PAXT directs a subset of long and polyadenylated poly(A) RNAs for exosomal degradation. The RNA exosome is fundamental for the degradation of RNA in eukaryotic nuclei. Substrate targeting is facilitated by its cofactor ZCCHC8, which links to RNA-binding protein adapters. Associated with the RNA exosome complex and involved in the 3'-processing of the 7S pre-RNA to the mature 5.8S rRNA. May be involved in pre-mRNA splicing. In the context of NEXT complex can also in vitro unwind DNA:RNA heteroduplexes with a 3' poly (A) RNA tracking strand. Can promote unwinding and degradation of structured RNA substrates when associated with the nuclear exosome and its cofactors. Can displace a DNA strand while translocating on RNA to ultimately degrade the RNA within a DNA/RNA heteroduplex. Plays a role in DNA damage response. The chain is Exosome RNA helicase MTR4 from Mus musculus (Mouse).